Here is a 421-residue protein sequence, read N- to C-terminus: Succinate--CoA ligase [ADP-forming] subunit beta, mitochondrial (421 aa).

A mitochondrion-targeting transit peptide spans 1–26 (MRGLVNKLVSRSLSISGKWQNQQLRR). The 244-residue stretch at 35-278 (AELMGKYGVN…PTQEDPREVA (244 aa)) folds into the ATP-grasp domain. ATP contacts are provided by residues K74, 81–83 (GRG), and E141. Residues N233 and D247 each contribute to the Mg(2+) site. Substrate-binding positions include N298 and 355-357 (GIM).

This sequence belongs to the succinate/malate CoA ligase beta subunit family. In terms of assembly, heterodimer of an alpha and a beta subunit. Mg(2+) serves as cofactor.

It is found in the mitochondrion. It carries out the reaction succinate + ATP + CoA = succinyl-CoA + ADP + phosphate. Its pathway is carbohydrate metabolism; tricarboxylic acid cycle; succinate from succinyl-CoA (ligase route): step 1/1. In terms of biological role, succinyl-CoA synthetase functions in the citric acid cycle (TCA), coupling the hydrolysis of succinyl-CoA to the synthesis of ATP and thus represents the only step of substrate-level phosphorylation in the TCA. The beta subunit provides nucleotide specificity of the enzyme and binds the substrate succinate, while the binding sites for coenzyme A and phosphate are found in the alpha subunit. The sequence is that of Succinate--CoA ligase [ADP-forming] subunit beta, mitochondrial from Arabidopsis thaliana (Mouse-ear cress).